Here is a 185-residue protein sequence, read N- to C-terminus: NAD(P)H-dependent FMN reductase PA1204 (185 aa).

Residues 13 to 20 and 81 to 83 contribute to the FMN site; these read SLRSGSYN and YNY. 115-122 serves as a coordination point for NAD(+); it reads SAGRFGTA.

The protein belongs to the SsuE family. As to quaternary structure, homodimer. FMN serves as cofactor.

Its function is as follows. Has NAD(P)H-dependent FMN reductase activity. The protein is NAD(P)H-dependent FMN reductase PA1204 of Pseudomonas aeruginosa (strain ATCC 15692 / DSM 22644 / CIP 104116 / JCM 14847 / LMG 12228 / 1C / PRS 101 / PAO1).